A 220-amino-acid polypeptide reads, in one-letter code: Large ribosomal subunit protein uL16z (220 aa).

It belongs to the universal ribosomal protein uL16 family. In terms of assembly, component of the small ribosomal subunit. Mature ribosomes consist of a small (40S) and a large (60S) subunit. The 40S subunit contains about 33 different proteins and 1 molecule of RNA (18S). The 60S subunit contains about 49 different proteins and 3 molecules of RNA (25S, 5.8S and 5S). Interacts with NIK1. Interacts with LIMYB. In terms of processing, phosphorylated by NIK1 and NIK2 in vitro. In terms of tissue distribution, ubiquitous, with the highest expression in flowers. Expressed in seedlings, leaves, roots, stems and flowers. Expressed in young leaves, mostly in dividing cells and in the hydathodes, in the root tips and lateral root primordia, in pistils, anthers, and pollen grains, and in developing seeds.

It is found in the cytoplasm. The protein localises to the nucleus. Its function is as follows. Ribosomal protein involved in translational regulation. Contribute to general translation under UV-B stress. Involved in the NIK1-mediated defense response to geminivirus infection. Acts coordinately with LIMYB as a transcriptional repressor. The chain is Large ribosomal subunit protein uL16z from Arabidopsis thaliana (Mouse-ear cress).